A 751-amino-acid chain; its full sequence is Catalase-peroxidase 2 (751 aa).

The N-terminal stretch at 1–27 (MFKKTVPLLSAVAIAISFSAGTGVANA) is a signal peptide. The segment at residues 115-238 (WHGAGTYRVQ…LAAVQMGLIY (124 aa)) is a cross-link (tryptophyl-tyrosyl-methioninium (Trp-Tyr) (with M-264)). Residue His116 is the Proton acceptor of the active site. The segment at residues 238–264 (YVNPEGPNGKPDPLLAAKDIRDTFGRM) is a cross-link (tryptophyl-tyrosyl-methioninium (Tyr-Met) (with W-115)). His279 lines the heme b pocket.

The protein belongs to the peroxidase family. Peroxidase/catalase subfamily. As to quaternary structure, homodimer or homotetramer. Requires heme b as cofactor. Formation of the three residue Trp-Tyr-Met cross-link is important for the catalase, but not the peroxidase activity of the enzyme.

The enzyme catalyses H2O2 + AH2 = A + 2 H2O. The catalysed reaction is 2 H2O2 = O2 + 2 H2O. Functionally, bifunctional enzyme with both catalase and broad-spectrum peroxidase activity. The sequence is that of Catalase-peroxidase 2 from Idiomarina loihiensis (strain ATCC BAA-735 / DSM 15497 / L2-TR).